The sequence spans 100 residues: Large ribosomal subunit protein uL23 (100 aa).

This sequence belongs to the universal ribosomal protein uL23 family. As to quaternary structure, part of the 50S ribosomal subunit. Contacts protein L29, and trigger factor when it is bound to the ribosome.

Functionally, one of the early assembly proteins it binds 23S rRNA. One of the proteins that surrounds the polypeptide exit tunnel on the outside of the ribosome. Forms the main docking site for trigger factor binding to the ribosome. The chain is Large ribosomal subunit protein uL23 from Parasynechococcus marenigrum (strain WH8102).